The following is a 593-amino-acid chain: ATP-dependent lipid A-core flippase (593 aa).

The next 6 membrane-spanning stretches (helical) occupy residues 33 to 55 (YIFL…YGFG), 67 to 87 (ILML…VGSF), 146 to 166 (AIIT…VMFV), 169 to 189 (WQLS…ISII), 258 to 278 (VIQI…AIFG), and 284 to 304 (GSSW…AAIL). The region spanning 38-319 (ADASMIYLIN…LTKVNVVIQK (282 aa)) is the ABC transmembrane type-1 domain. The 235-residue stretch at 351 to 585 (VTIKDLSFAF…GGLYTGSINR (235 aa)) folds into the ABC transporter domain. 383 to 390 (GKSGSGKT) contributes to the ATP binding site.

This sequence belongs to the ABC transporter superfamily. Lipid exporter (TC 3.A.1.106) family. In terms of assembly, homodimer.

The protein localises to the cell membrane. It carries out the reaction ATP + H2O + lipid A-core oligosaccharideSide 1 = ADP + phosphate + lipid A-core oligosaccharideSide 2.. Its function is as follows. Involved in lipopolysaccharide (LPS) biosynthesis. Translocates lipid A-core from the inner to the outer leaflet of the inner membrane. Transmembrane domains (TMD) form a pore in the inner membrane and the ATP-binding domain (NBD) is responsible for energy generation. The protein is ATP-dependent lipid A-core flippase of Francisella novicida.